Here is an 840-residue protein sequence, read N- to C-terminus: Leucine--tRNA ligase (840 aa).

The 'HIGH' region signature appears at 44 to 55; that stretch reads PYPSANGLHVGH. A 'KMSKS' region motif is present at residues 617–621; sequence KMSKS. Position 620 (lysine 620) interacts with ATP.

It belongs to the class-I aminoacyl-tRNA synthetase family.

The protein resides in the cytoplasm. It carries out the reaction tRNA(Leu) + L-leucine + ATP = L-leucyl-tRNA(Leu) + AMP + diphosphate. The chain is Leucine--tRNA ligase from Borreliella burgdorferi (strain ATCC 35210 / DSM 4680 / CIP 102532 / B31) (Borrelia burgdorferi).